We begin with the raw amino-acid sequence, 834 residues long: Glycerol-3-phosphate acyltransferase (834 aa).

An HXXXXD motif motif is present at residues 309–314 (CHRSHI).

This sequence belongs to the GPAT/DAPAT family.

It localises to the cell inner membrane. The enzyme catalyses sn-glycerol 3-phosphate + an acyl-CoA = a 1-acyl-sn-glycero-3-phosphate + CoA. It participates in phospholipid metabolism; CDP-diacylglycerol biosynthesis; CDP-diacylglycerol from sn-glycerol 3-phosphate: step 1/3. This is Glycerol-3-phosphate acyltransferase from Pseudomonas paraeruginosa (strain DSM 24068 / PA7) (Pseudomonas aeruginosa (strain PA7)).